Here is a 215-residue protein sequence, read N- to C-terminus: Chaperone protein TorD (215 aa).

This sequence belongs to the TorD/DmsD family. TorD subfamily.

It is found in the cytoplasm. In terms of biological role, involved in the biogenesis of TorA. Acts on TorA before the insertion of the molybdenum cofactor and, as a result, probably favors a conformation of the apoenzyme that is competent for acquiring the cofactor. In Vibrio vulnificus (strain YJ016), this protein is Chaperone protein TorD.